Consider the following 244-residue polypeptide: Protein IN2-1 homolog B (244 aa).

A disordered region spans residues 1–27 (MAAAAAAPASSEKEVLPPSLTSSSEPP). A GST N-terminal domain is found at 32–113 (GTTRLYVAYH…YIDTNFEGPA (82 aa)). Residues Val85 and 97–98 (ES) contribute to the glutathione site. In terms of domain architecture, GST C-terminal spans 118-241 (DSEKQQFAEE…FLLEHTKKRL (124 aa)).

In Oryza sativa subsp. indica (Rice), this protein is Protein IN2-1 homolog B (GSTZ5).